Reading from the N-terminus, the 225-residue chain is ATP synthase subunit a (225 aa).

A run of 6 helical transmembrane segments spans residues 18-38 (LSLN…MFWL), 73-93 (ILIS…FPYI), 100-120 (MTLT…FGWI), 126-146 (MFTH…MVLI), 156-176 (GTLA…LTLL), and 187-207 (IMLF…AVAM).

This sequence belongs to the ATPase A chain family. As to quaternary structure, F-type ATPases have 2 components, CF(1) - the catalytic core - and CF(0) - the membrane proton channel. CF(1) has five subunits: alpha(3), beta(3), gamma(1), delta(1), epsilon(1). CF(0) has three main subunits: a, b and c.

It is found in the mitochondrion inner membrane. Its function is as follows. Mitochondrial membrane ATP synthase (F(1)F(0) ATP synthase or Complex V) produces ATP from ADP in the presence of a proton gradient across the membrane which is generated by electron transport complexes of the respiratory chain. F-type ATPases consist of two structural domains, F(1) - containing the extramembraneous catalytic core and F(0) - containing the membrane proton channel, linked together by a central stalk and a peripheral stalk. During catalysis, ATP synthesis in the catalytic domain of F(1) is coupled via a rotary mechanism of the central stalk subunits to proton translocation. Key component of the proton channel; it may play a direct role in the translocation of protons across the membrane. The protein is ATP synthase subunit a (ATP6) of Locusta migratoria (Migratory locust).